Reading from the N-terminus, the 395-residue chain is uncharacterized protein (395 aa).

7 helical membrane-spanning segments follow: residues 42–62 (LKYV…LIFI), 67–87 (LYSF…FVLL), 97–117 (LIFN…LIIF), 128–148 (ILST…SIIP), 196–216 (FIYA…LYIL), 241–261 (ILFY…SFVA), and 281–301 (LFFS…GTVV).

The protein resides in the cell membrane. This is an uncharacterized protein from Mycoplasma genitalium (strain ATCC 33530 / DSM 19775 / NCTC 10195 / G37) (Mycoplasmoides genitalium).